The primary structure comprises 146 residues: MVKKVLLINGPNLNLLGTREPEKYGTTSLSDIEQAAIEQAKLKNNDSEVLVFQSNTEGFIIDRIHEAKRQGVGFVVINAGAYTHTSVGIRDALLGTAIPFIEVHITNVHQREPFRHQSYLSDKAVAVICGLGVYGYTAAIEYALNY.

The active-site Proton acceptor is Y24. The substrate site is built by N78, H84, and D91. The Proton donor role is filled by H104. Substrate-binding positions include 105–106 (IT) and R115.

This sequence belongs to the type-II 3-dehydroquinase family. Homododecamer. Adopts a ring-like structure, composed of an arrangement of two hexameric rings stacked on top of one another.

It carries out the reaction 3-dehydroquinate = 3-dehydroshikimate + H2O. It participates in aromatic compound metabolism; 3,4-dihydroxybenzoate biosynthesis; 3,4-dihydroxybenzoate from 3-dehydroquinate: step 1/2. Is involved in the catabolism of quinate. Allows the utilization of quinate as carbon source via the beta-ketoadipate pathway. The protein is Catabolic 3-dehydroquinase of Candida albicans (strain SC5314 / ATCC MYA-2876) (Yeast).